We begin with the raw amino-acid sequence, 429 residues long: Enolase (429 aa).

Gln165 provides a ligand contact to (2R)-2-phosphoglycerate. Glu207 (proton donor) is an active-site residue. Mg(2+) contacts are provided by Asp244, Glu287, and Asp314. Residues Lys339, Arg368, Ser369, and Lys390 each coordinate (2R)-2-phosphoglycerate. The Proton acceptor role is filled by Lys339.

It belongs to the enolase family. Requires Mg(2+) as cofactor.

It localises to the cytoplasm. The protein localises to the secreted. It is found in the cell surface. It catalyses the reaction (2R)-2-phosphoglycerate = phosphoenolpyruvate + H2O. Its pathway is carbohydrate degradation; glycolysis; pyruvate from D-glyceraldehyde 3-phosphate: step 4/5. Functionally, catalyzes the reversible conversion of 2-phosphoglycerate (2-PG) into phosphoenolpyruvate (PEP). It is essential for the degradation of carbohydrates via glycolysis. This chain is Enolase, found in Roseiflexus sp. (strain RS-1).